We begin with the raw amino-acid sequence, 397 residues long: Phosphoglycerate kinase (397 aa).

Residues 19–21 (DFN), Arg35, 58–61 (HLGR), Arg117, and Arg150 contribute to the substrate site. Residues Lys201, Glu323, and 349–352 (GGDS) contribute to the ATP site.

Belongs to the phosphoglycerate kinase family. Monomer.

The protein localises to the cytoplasm. It carries out the reaction (2R)-3-phosphoglycerate + ATP = (2R)-3-phospho-glyceroyl phosphate + ADP. Its pathway is carbohydrate degradation; glycolysis; pyruvate from D-glyceraldehyde 3-phosphate: step 2/5. The sequence is that of Phosphoglycerate kinase from Syntrophobacter fumaroxidans (strain DSM 10017 / MPOB).